We begin with the raw amino-acid sequence, 552 residues long: CTP synthase (552 aa).

The segment at M1 to M273 is amidoligase domain. S21 contributes to the CTP binding site. S21 lines the UTP pocket. ATP-binding positions include S22–I27 and D79. Mg(2+) contacts are provided by D79 and E147. Residues D154 to E156, K194 to Q199, and K230 contribute to the CTP site. UTP contacts are provided by residues K194–Q199 and K230. A Glutamine amidotransferase type-1 domain is found at T298 to V548. G359 contacts L-glutamine. The active-site Nucleophile; for glutamine hydrolysis is C386. Residues L387–Q390, E410, and R478 contribute to the L-glutamine site. Residues H521 and E523 contribute to the active site.

It belongs to the CTP synthase family. Homotetramer.

It catalyses the reaction UTP + L-glutamine + ATP + H2O = CTP + L-glutamate + ADP + phosphate + 2 H(+). It carries out the reaction L-glutamine + H2O = L-glutamate + NH4(+). The enzyme catalyses UTP + NH4(+) + ATP = CTP + ADP + phosphate + 2 H(+). Its pathway is pyrimidine metabolism; CTP biosynthesis via de novo pathway; CTP from UDP: step 2/2. Its activity is regulated as follows. Allosterically activated by GTP, when glutamine is the substrate; GTP has no effect on the reaction when ammonia is the substrate. The allosteric effector GTP functions by stabilizing the protein conformation that binds the tetrahedral intermediate(s) formed during glutamine hydrolysis. Inhibited by the product CTP, via allosteric rather than competitive inhibition. In terms of biological role, catalyzes the ATP-dependent amination of UTP to CTP with either L-glutamine or ammonia as the source of nitrogen. Regulates intracellular CTP levels through interactions with the four ribonucleotide triphosphates. The polypeptide is CTP synthase (Wolinella succinogenes (strain ATCC 29543 / DSM 1740 / CCUG 13145 / JCM 31913 / LMG 7466 / NCTC 11488 / FDC 602W) (Vibrio succinogenes)).